Reading from the N-terminus, the 173-residue chain is Coordinator of PRMT5 and differentiation stimulator (173 aa).

The residue at position 1 (Met1) is an N-acetylmethionine. Residues 1–70 (MDPQAATGRG…EGPSSEEEGF (70 aa)) form a disordered region. Phosphoserine is present on residues Ser64 and Ser65.

Interacts with PRMT5. Interacts with histone H4; specifically interacts with the N-terminus of histone H4 but not with histone H3. Interacts with CBFB. Found in a complex with PRMT5, RUNX1 and CBFB.

It localises to the nucleus. Histone-binding protein required for histone H4 methyltransferase activity of PRMT5. Specifically required for histone H4 'Arg-3' methylation mediated by PRMT5, but not histone H3 'Arg-8' methylation, suggesting that it modulates the substrate specificity of PRMT5. Specifically interacts with the N-terminus of histone H4 but not with histone H3, suggesting that it acts by promoting the association between histone H4 and PRMT5. Involved in CCNE1 promoter repression. Plays a role in muscle cell differentiation by modulating the recruitment of PRMT5 to the promoter of genes involved in the coordination between cell cycle exit and muscle differentiation. The protein is Coordinator of PRMT5 and differentiation stimulator (Coprs) of Mus musculus (Mouse).